A 248-amino-acid chain; its full sequence is Phosphomannomutase (248 aa).

Residue D14 is the Nucleophile of the active site. Mg(2+) is bound by residues D14 and D16. The active-site Proton donor/acceptor is the D16. Positions 23, 125, 136, 143, 181, and 183 each coordinate alpha-D-mannose 1-phosphate. The Mg(2+) site is built by D209, F221, and T226.

It belongs to the eukaryotic PMM family. In terms of assembly, homodimer. Requires Mg(2+) as cofactor.

Its subcellular location is the cytoplasm. It catalyses the reaction alpha-D-mannose 1-phosphate = D-mannose 6-phosphate. The protein operates within nucleotide-sugar biosynthesis; GDP-alpha-D-mannose biosynthesis; alpha-D-mannose 1-phosphate from D-fructose 6-phosphate: step 2/2. Catalyzes the interconversion of mannose-6-phosphate to mannose-1-phosphate, the precursor for the synthesis of GDP-mannose. GDP-mannose is an essential sugar nucleotide for the synthesis of D-mannose-containing cell wall polysaccharides (galactomannans and glucomannans), glycolipids, glycoproteins and the antioxidant L-ascorbate. The chain is Phosphomannomutase from Oryza sativa subsp. indica (Rice).